The primary structure comprises 319 residues: Beta-sarcoglycan (319 aa).

A compositionally biased stretch (low complexity) spans 1 to 10 (MAAAAAAAAA). The segment at 1-33 (MAAAAAAAAAEQQSSNGPVKKSMREKAVERRNV) is disordered. The Cytoplasmic portion of the chain corresponds to 1–66 (MAAAAAAAAA…GLRGRKGNLA (66 aa)). Basic and acidic residues predominate over residues 22–33 (SMREKAVERRNV). A helical; Signal-anchor for type II membrane protein transmembrane segment spans residues 67–87 (ICVIILLFILAVINLIITLVI). The Extracellular portion of the chain corresponds to 88-318 (WAVIRIGPNG…QISDNPCGNT (231 aa)). 3 N-linked (GlcNAc...) asparagine glycosylation sites follow: Asn-159, Asn-212, and Asn-259. 2 cysteine pairs are disulfide-bonded: Cys-289–Cys-315 and Cys-291–Cys-308.

This sequence belongs to the sarcoglycan beta/delta/gamma/zeta family. In terms of assembly, cross-link to form 2 major subcomplexes: one consisting of SGCB, SGCD and SGCG and the other consisting of SGCB and SGCD. The association between SGCB and SGCG is particularly strong while SGCA is loosely associated with the other sarcoglycans. In terms of processing, disulfide bonds are present.

The protein localises to the cell membrane. It is found in the sarcolemma. The protein resides in the cytoplasm. Its subcellular location is the cytoskeleton. In terms of biological role, component of the sarcoglycan complex, a subcomplex of the dystrophin-glycoprotein complex which forms a link between the F-actin cytoskeleton and the extracellular matrix. The chain is Beta-sarcoglycan (SGCB) from Pongo abelii (Sumatran orangutan).